Consider the following 582-residue polypeptide: MNSTIEQLKHRIAVASKRKPAELVIKNAEVLNVFTGDWKKTDVAIADGYIAGLGNYEGLQTVDATGKKIVPGLINGHIHIESTMLTPREFSKVMLKHGVTTAITDPHEIANVAGTDGLEYMLNASDALPMNIFVNMPSSVPATQFEHNGAQLDAKDISSYFQNPNVLGLAEVMDFPSVANADQKMLEKIVSTIQHGGIIDGHAAGLSKEDLNIYMAAGIRNDHESVSAQEGKDRLEAGMYLMIREGTVAKDLEALLPIINDKNARRCIFVTDDMLLDDLVENGDIDHIIRKAIQLGLDPVMAYQMATLNTAECFGLRELGAVAPGYIADFLILNDENQVDIHQVYKNGKCVVDEGEINQSYFAASLTYDATTLPKPRIQQLKASDFSIDLTDDYCNIIEIVPNKIITNHVCERVEVKEGKFVPSVDKDQLLIAVVERHKGLGYIGKGIVKGFKMKEGAIATSVAHDSHNFVVVGTSEEEMLSAIKKVEQLDGGLVVTKRKQVKAHLALPIGGLMSDKDYLDAYEEVLKLNHVAVENGIPSNFNPFLTLSFLTLPVIPTLKVTDQGLFDFKTFSHINVEVEEK.

It belongs to the metallo-dependent hydrolases superfamily. Adenine deaminase family. Mn(2+) is required as a cofactor.

It carries out the reaction adenine + H2O + H(+) = hypoxanthine + NH4(+). This is Adenine deaminase from Oceanobacillus iheyensis (strain DSM 14371 / CIP 107618 / JCM 11309 / KCTC 3954 / HTE831).